The sequence spans 60 residues: Metallothionein A (60 aa).

The beta stretch occupies residues 1-28; that stretch reads MDPCECSKSGTCNCGGSCTCTNCSCKSC. Positions 4, 6, 12, 14, 18, 20, 23, 25, 28, 32, 33, 35, 36, 40, 43, 47, 49, 54, 58, and 59 each coordinate a divalent metal cation. The segment at 29–60 is alpha; that stretch reads KKSCCPCCPSGCTKCASGCVCKGKTCDTSCCQ.

Belongs to the metallothionein superfamily. Type 1 family.

In terms of biological role, metallothioneins have a high content of cysteine residues that bind various heavy metals. The chain is Metallothionein A (mta) from Chionodraco rastrospinosus (Ocellated icefish).